Here is an 849-residue protein sequence, read N- to C-terminus: MSQQHEATAAAAEKPLNNGYLQANAPLEELSATVVSPLLGQQQVQHQAPHQMQQQQQQQQQNKLPTVVFLAPDGSGGVGIQRGNPAQGNPGMVTGTGSHSDWLLKESQQRRRLLVLAIAFTVLGAAIGALAIYFASVHQRCHLYRLEPDNDDRPNGRWNQDSGSAHEGQDNICMTQECVRTAASLLSAMDLNSDPCEDFFQYACGTWNKMHPIPEDRSSISTFEVLSDQQQVILRAVLEEPIDERDNKATIKAKTFFKSCMDIPQIRKIGTGRLKQVLQSLGGWPVIERNWSPPADLSVERLMGQLRLNYSEPVMIELYVGADDKNSSVNILQMDQLQYALPSRDYYLKESSANDRRAYHRYMTQVALLLGADPATAAAELEKVVLFETQLVNVSLPEADRHDTSLVYRKMLLPELQELVPEVQWQEYLQAALGPGIPLQEDEPLVTYGLHYLTEMGKILAHTDRRVVHNYMLWRLVMSLMSHMIDEYQRERVEFRKILMGIQSERTRWSQCVEWTNKKLGVAVGALFIRDNFNQESKEVALEMIHTIRAAFNELLAENDWMDDETRAVAKEKADSMNERIGYPELLTNATELEQEYVNLTIVPDNFINNVLSILQWESEKMLRLLRQPVDKEKWTTEPAVVNAFYNPNKNDIVFPAGILQPLFYSQHFPKSLNYGGIGVVIGHEITHGFDDKGRQFDKEGNMMQWWNNATIEAFRERTQCVIDQYSRYKINEVDMFMDGRMTQGENIADNGGLKQAFRAYKKWETLHGREQQLPGLNMTHDQLFFLNYAQIWCGSMRPEDALTKIRSAVHSPGFVRVLGPLSNSRDFASAYKCPLGSTMNPAEKCSVW.

Topologically, residues 1–113 are cytoplasmic; sequence MSQQHEATAA…LKESQQRRRL (113 aa). The segment covering 41–61 has biased composition (low complexity); the sequence is QQQVQHQAPHQMQQQQQQQQQ. A disordered region spans residues 41 to 63; the sequence is QQQVQHQAPHQMQQQQQQQQQNK. Residues 114–134 form a helical; Signal-anchor for type II membrane protein membrane-spanning segment; it reads LVLAIAFTVLGAAIGALAIYF. Over 135 to 849 the chain is Extracellular; it reads ASVHQRCHLY…MNPAEKCSVW (715 aa). Over residues 146–155 the composition is skewed to basic and acidic residues; it reads LEPDNDDRPN. The interval 146-167 is disordered; the sequence is LEPDNDDRPNGRWNQDSGSAHE. Residues 172 to 849 enclose the Peptidase M13 domain; the sequence is ICMTQECVRT…MNPAEKCSVW (678 aa). 5 disulfide bridges follow: Cys-173/Cys-178, Cys-196/Cys-834, Cys-204/Cys-794, Cys-260/Cys-512, and Cys-721/Cys-846. 5 N-linked (GlcNAc...) asparagine glycosylation sites follow: Asn-309, Asn-326, Asn-393, Asn-589, and Asn-599. His-684 lines the Zn(2+) pocket. Residue Glu-685 is part of the active site. His-688 is a binding site for Zn(2+). Asn-709 carries an N-linked (GlcNAc...) asparagine glycan. Glu-746 provides a ligand contact to Zn(2+). The Proton donor role is filled by Asp-750. Asn-778 carries N-linked (GlcNAc...) asparagine glycosylation.

The protein belongs to the peptidase M13 family. The cofactor is Zn(2+). In terms of tissue distribution, expressed in the testicular tube, near and in the seminal vesicles. In adults and third-instar larvae, expressed in the midgut and in the mushroom bodies of the brain and neurons in the pars intercerebralis. Also expressed in neurons of the ventral ganglion and imaginal disks (wing and leg) of third-instar larvae. In stage 17 embryos, expressed in the peripheral nervous system, pharynx and midgut.

It localises to the cell membrane. The enzyme catalyses Preferential cleavage of polypeptides between hydrophobic residues, particularly with Phe or Tyr at P1'.. Its function is as follows. Metalloendoprotease which functions in fertility and memory formation. Required in the dorsal paired medial neurons and alpha/beta mushroom body neurons for the proper formation of long-term and middle-term memories. Required in males to maximise egg-laying in female mates and is also required in females for their fertility. The polypeptide is Neprilysin-1 (Drosophila melanogaster (Fruit fly)).